A 4543-amino-acid chain; its full sequence is Low-density lipoprotein receptor-related protein 1 (4543 aa).

The N-terminal stretch at M1–R21 is a signal peptide. At A22–G4419 the chain is on the extracellular side. 2 LDL-receptor class A domains span residues K27 to Q68 and S72 to E112. 6 cysteine pairs are disulfide-bonded: C29-C42, C36-C55, C49-C66, C74-C87, C81-C100, and C94-C110. An EGF-like 1 domain is found at Q113 to K151. N-linked (GlcNAc...) asparagine glycosylation occurs at N116. Cystine bridges form between C117-C126, C122-C135, C137-C150, C156-C166, C162-C175, and C177-C190. N138 carries an N-linked (GlcNAc...) asparagine glycan. The 40-residue stretch at D152–K191 folds into the EGF-like 2; calcium-binding domain. N187 and N276 each carry an N-linked (GlcNAc...) asparagine glycan. LDL-receptor class B repeat units lie at residues G294 to M336, G337 to S380, and R381 to Y424. The N-linked (GlcNAc...) asparagine glycan is linked to N359. The N-linked (GlcNAc...) asparagine glycan is linked to N448. Residues R476–K522 form the EGF-like 3 domain. Intrachain disulfides connect C480-C495, C491-C506, and C508-C521. LDL-receptor class B repeat units follow at residues G573–G615, N616–N661, G662–A712, and K713–F756. N-linked (GlcNAc...) asparagine glycosylation occurs at N731. Residues G801–E841 form the EGF-like 4 domain. Intrachain disulfides connect C805–C816, C812–C825, C827–C840, C852–C864, C859–C877, C871–C888, C893–C905, C900–C918, C912–C929, C934–C946, C941–C959, C953–C969, C974–C987, C982–C1000, C994–C1009, C1013–C1025, C1020–C1038, C1032–C1049, C1060–C1073, C1067–C1086, C1080–C1095, C1102–C1116, C1110–C1129, C1123–C1138, C1143–C1157, C1150–C1170, C1164–C1180, C1183–C1194, C1190–C1204, C1206–C1219, C1225–C1235, C1231–C1244, and C1246–C1259. LDL-receptor class A domains lie at P850–Q890, H891–A931, R932–Y971, P972–H1011, H1011–N1051, G1058–G1097, H1100–S1140, and L1141–C1180. 6 residues coordinate Ca(2+): W869, D872, D874, D876, D882, and E883. N-linked (GlcNAc...) asparagine glycosylation occurs at N926. Residues W1030, D1033, D1035, D1037, D1043, and E1044 each coordinate Ca(2+). The N-linked (GlcNAc...) asparagine glycan is linked to N1048. Ca(2+)-binding residues include W1078, D1081, D1083, D1085, D1091, and E1092. Residues N1152 and N1153 are each glycosylated (N-linked (GlcNAc...) asparagine). EGF-like domains are found at residues D1181–Q1220 and I1221–R1260. 2 N-linked (GlcNAc...) asparagine glycosylation sites follow: N1193 and N1216. Residue N1305 is glycosylated (N-linked (GlcNAc...) asparagine). 5 LDL-receptor class B repeats span residues S1307–A1353, G1354–Y1396, G1397–E1443, K1444–E1488, and V1489–S1529. N1509 carries N-linked (GlcNAc...) asparagine glycosylation. An EGF-like 7 domain is found at A1534 to Y1577. 3 disulfide bridges follow: C1538–C1551, C1547–C1561, and C1563–C1576. N1556, N1573, N1614, and N1643 each carry an N-linked (GlcNAc...) asparagine glycan. LDL-receptor class B repeat units lie at residues Q1625–S1667, R1668–H1711, G1712–E1751, and S1752–K1796. N-linked (GlcNAc...) asparagine glycans are attached at residues N1721, N1731, N1761, and N1823. The region spanning G1842–E1883 is the EGF-like 8 domain. Disulfide bonds link C1846-C1857, C1853-C1867, and C1869-C1882. N-linked (GlcNAc...) asparagine glycosylation is present at N1929. LDL-receptor class B repeat units lie at residues D1930–A1972, G1973–K2015, G2016–D2059, and G2060–Y2103. Residues N1991 and N2044 are each glycosylated (N-linked (GlcNAc...) asparagine). Residues N2113 and N2123 are each glycosylated (N-linked (GlcNAc...) asparagine). Residues G2151 to R2191 enclose the EGF-like 9 domain. Disulfide bonds link C2155-C2166, C2162-C2176, and C2178-C2190. LDL-receptor class B repeat units follow at residues N2247 to W2288, D2289 to Q2337, N2338 to A2382, E2383 to Y2425, and I2426 to D2467. The N-linked (GlcNAc...) asparagine glycan is linked to N2466. Residues E2472 to K2512 form the EGF-like 10 domain. 3 disulfides stabilise this stretch: C2476–C2487, C2483–C2497, and C2499–C2511. N2496 is a glycosylation site (N-linked (GlcNAc...) asparagine). A glycan (N-linked (GlcNAc...) asparagine) is linked at N2515. 7 consecutive LDL-receptor class A domains span residues S2516 to S2557, R2558 to K2596, T2597 to A2635, T2636 to G2684, P2688 to K2730, K2730 to L2769, and T2770 to Y2812. Intrachain disulfides connect C2518/C2531, C2526/C2544, C2538/C2555, C2560/C2572, C2567/C2585, and C2579/C2594. A glycan (N-linked (GlcNAc...) asparagine) is linked at N2595. Intrachain disulfides connect C2599–C2611, C2606–C2624, C2618–C2633, C2638–C2660, C2654–C2673, C2667–C2682, C2690–C2702, C2697–C2715, C2709–C2724, C2732–C2744, C2739–C2757, C2751–C2767, C2772–C2785, C2779–C2798, and C2792–C2810. N-linked (GlcNAc...) asparagine glycosylation is found at N2614 and N2632. N2813 carries an N-linked (GlcNAc...) asparagine glycan. 3 LDL-receptor class A domains span residues N2814–Y2853, P2854–S2897, and S2900–I2938. Intrachain disulfides connect C2816–C2828, C2823–C2841, C2835–C2851, C2856–C2868, C2863–C2882, C2876–C2895, C2902–C2914, C2909–C2927, C2921–C2936, C2941–C2953, C2949–C2962, C2964–C2977, C2983–C2993, C2989–C3002, and C3004–C3018. The N-linked (GlcNAc...) asparagine glycan is linked to N2903. Residues N2939–I2978 form the EGF-like 11 domain. The EGF-like 12; calcium-binding domain maps to D2979–K3019. N3045 and N3086 each carry an N-linked (GlcNAc...) asparagine glycan. 5 LDL-receptor class B repeats span residues Q3066–G3110, G3111–N3153, G3154–N3197, S3198–Y3240, and I3241–Y3281. An N-linked (GlcNAc...) asparagine glycan is attached at N3176. N-linked (GlcNAc...) asparagine glycosylation is present at N3261. The 42-residue stretch at P3287–V3328 folds into the EGF-like 13 domain. 3 cysteine pairs are disulfide-bonded: C3291-C3302, C3298-C3312, and C3314-C3327. 11 consecutive LDL-receptor class A domains span residues S3329–E3368, F3369–I3407, H3408–E3447, V3448–Q3488, M3489–E3530, R3531–P3569, R3570–P3608, P3608–T3646, R3649–K3689, F3690–S3730, and K3736–H3776. N3330 carries N-linked (GlcNAc...) asparagine glycosylation. Cystine bridges form between C3331-C3343, C3338-C3356, C3350-C3366, C3371-C3383, C3378-C3396, C3390-C3405, C3410-C3423, C3417-C3436, C3430-C3445, C3450-C3463, C3457-C3476, C3470-C3486, C3491-C3504, C3498-C3517, C3511-C3528, C3533-C3545, C3540-C3558, C3552-C3567, C3572-C3584, C3579-C3597, C3591-C3606, C3610-C3622, C3617-C3635, C3629-C3644, C3658-C3676, C3670-C3687, C3692-C3706, C3700-C3719, C3713-C3728, C3738-C3752, C3747-C3765, C3759-C3774, C3783-C3796, C3790-C3805, C3807-C3820, C3826-C3836, C3832-C3845, and C3847-C3858. N-linked (GlcNAc...) asparagine glycosylation occurs at N3485. N3659 is a glycosylation site (N-linked (GlcNAc...) asparagine). 2 EGF-like domains span residues K3779–Q3821 and D3822–K3859. N3786 carries an N-linked (GlcNAc...) asparagine glycan. An N-linked (GlcNAc...) asparagine glycan is attached at N3837. 4 LDL-receptor class B repeats span residues N3910–N3952, G3969–R4011, G4012–N4055, and E4056–Y4100. The Recognition site for proteolytical processing signature appears at R3939–R3942. N3952 carries N-linked (GlcNAc...) asparagine glycosylation. N-linked (GlcNAc...) asparagine glycans are attached at residues N4074 and N4124. 7 EGF-like domains span residues V4146–V4182, T4195–Q4231, Q4231–D4267, D4267–Q4303, Q4303–Q4339, Q4339–L4374, and S4372–E4409. 21 disulfide bridges follow: C4150–C4159, C4155–C4168, C4170–C4181, C4199–C4209, C4203–C4219, C4221–C4230, C4235–C4245, C4239–C4255, C4257–C4266, C4271–C4281, C4275–C4291, C4293–C4302, C4307–C4317, C4311–C4327, C4329–C4338, C4343–C4351, C4346–C4362, C4364–C4373, C4376–C4386, C4380–C4397, and C4399–C4408. N4178 carries N-linked (GlcNAc...) asparagine glycosylation. An N-linked (GlcNAc...) asparagine glycan is attached at N4278. The chain crosses the membrane as a helical span at residues R4420–Y4443. The Cytoplasmic portion of the chain corresponds to K4444–A4543. An NPXY motif motif is present at residues F4501–Y4506. Residues S4522 to A4543 are disordered. Over residues T4523–D4535 the composition is skewed to basic and acidic residues.

This sequence belongs to the LDLR family. Binds vitellogenin and LRPAP1 (alpha 2-macroglobulin). Cleaved into a 85 kDa membrane-spanning subunit (LRP-85) and a 515 kDa large extracellular domain (LRP-515) that remains non-covalently associated. Somatic.

It is found in the membrane. Its subcellular location is the coated pit. In terms of biological role, endocytic receptor involved in endocytosis and in phagocytosis of apoptotic cells. Involved in cellular lipid homeostasis. Involved in the plasma clearance of chylomicron remnants and activated LRPAP1 (alpha 2-macroglobulin), as well as the local metabolism of complexes between plasminogen activators and their endogenous inhibitors. Acts as an alpha-2-macroglobulin receptor. The sequence is that of Low-density lipoprotein receptor-related protein 1 (LRP1) from Gallus gallus (Chicken).